The primary structure comprises 336 residues: tRNA-cytidine(32) 2-sulfurtransferase (336 aa).

A disordered region spans residues 1-34; it reads MNAPEILNGAATASPADATEATQTAARAKTPLTR. Low complexity predominate over residues 10–22; sequence AATASPADATEAT. The PP-loop motif signature appears at 75–80; the sequence is SGGKDS. [4Fe-4S] cluster-binding residues include cysteine 150, cysteine 153, and cysteine 241.

This sequence belongs to the TtcA family. As to quaternary structure, homodimer. It depends on Mg(2+) as a cofactor. Requires [4Fe-4S] cluster as cofactor.

The protein localises to the cytoplasm. It carries out the reaction cytidine(32) in tRNA + S-sulfanyl-L-cysteinyl-[cysteine desulfurase] + AH2 + ATP = 2-thiocytidine(32) in tRNA + L-cysteinyl-[cysteine desulfurase] + A + AMP + diphosphate + H(+). It participates in tRNA modification. In terms of biological role, catalyzes the ATP-dependent 2-thiolation of cytidine in position 32 of tRNA, to form 2-thiocytidine (s(2)C32). The sulfur atoms are provided by the cysteine/cysteine desulfurase (IscS) system. The chain is tRNA-cytidine(32) 2-sulfurtransferase from Paraburkholderia phytofirmans (strain DSM 17436 / LMG 22146 / PsJN) (Burkholderia phytofirmans).